A 382-amino-acid polypeptide reads, in one-letter code: Homoserine O-acetyltransferase (382 aa).

The disordered stretch occupies residues 1-20 (MSTDQSPCPSATGAELLPPP). The 305-residue stretch at 59–363 (NVVLVEHALT…RDGHDGFLTE (305 aa)) folds into the AB hydrolase-1 domain. The active-site Nucleophile is Ser-164. Substrate is bound at residue Arg-234. Catalysis depends on residues Asp-327 and His-357. Position 358 (Asp-358) interacts with substrate.

The protein belongs to the AB hydrolase superfamily. MetX family. As to quaternary structure, homodimer.

Its subcellular location is the cytoplasm. It catalyses the reaction L-homoserine + acetyl-CoA = O-acetyl-L-homoserine + CoA. The protein operates within amino-acid biosynthesis; L-methionine biosynthesis via de novo pathway; O-acetyl-L-homoserine from L-homoserine: step 1/1. Transfers an acetyl group from acetyl-CoA to L-homoserine, forming acetyl-L-homoserine. The chain is Homoserine O-acetyltransferase from Nocardia farcinica (strain IFM 10152).